The primary structure comprises 265 residues: 4-hydroxy-tetrahydrodipicolinate reductase (265 aa).

NAD(+)-binding positions include 7 to 12 and aspartate 33; that span reads GASGRM. Arginine 34 is an NADP(+) binding site. Residues 96–98 and 120–123 each bind NAD(+); these read GTT and AANM. Residue histidine 153 is the Proton donor/acceptor of the active site. Residue histidine 154 participates in (S)-2,3,4,5-tetrahydrodipicolinate binding. Lysine 157 acts as the Proton donor in catalysis. 163–164 is a (S)-2,3,4,5-tetrahydrodipicolinate binding site; it reads GT.

Belongs to the DapB family.

It is found in the cytoplasm. The enzyme catalyses (S)-2,3,4,5-tetrahydrodipicolinate + NAD(+) + H2O = (2S,4S)-4-hydroxy-2,3,4,5-tetrahydrodipicolinate + NADH + H(+). The catalysed reaction is (S)-2,3,4,5-tetrahydrodipicolinate + NADP(+) + H2O = (2S,4S)-4-hydroxy-2,3,4,5-tetrahydrodipicolinate + NADPH + H(+). The protein operates within amino-acid biosynthesis; L-lysine biosynthesis via DAP pathway; (S)-tetrahydrodipicolinate from L-aspartate: step 4/4. Catalyzes the conversion of 4-hydroxy-tetrahydrodipicolinate (HTPA) to tetrahydrodipicolinate. This Burkholderia ambifaria (strain ATCC BAA-244 / DSM 16087 / CCUG 44356 / LMG 19182 / AMMD) (Burkholderia cepacia (strain AMMD)) protein is 4-hydroxy-tetrahydrodipicolinate reductase.